A 288-amino-acid polypeptide reads, in one-letter code: ATP synthase gamma chain 1 (288 aa).

This sequence belongs to the ATPase gamma chain family. F-type ATPases have 2 components, CF(1) - the catalytic core - and CF(0) - the membrane proton channel. CF(1) has five subunits: alpha(3), beta(3), gamma(1), delta(1), epsilon(1). CF(0) has three main subunits: a, b and c.

It localises to the cell inner membrane. Produces ATP from ADP in the presence of a proton gradient across the membrane. The gamma chain is believed to be important in regulating ATPase activity and the flow of protons through the CF(0) complex. This is ATP synthase gamma chain 1 from Photobacterium profundum (strain SS9).